The chain runs to 265 residues: Gamma-secretase subunit APH-1A (265 aa).

The Lumenal portion of the chain corresponds to 1 to 2 (MG). The chain crosses the membrane as a helical span at residues 3 to 23 (AAVFFGCTFVAFGPAFALFLI). The Cytoplasmic portion of the chain corresponds to 24-31 (TVAGDPLR). Residues 32-52 (VIILVAGAFFWLVSLLLASVV) traverse the membrane as a helical segment. The Lumenal segment spans residues 53-68 (WFILVHVTDRSDARLQ). The chain crosses the membrane as a helical span at residues 69–89 (YGLLIFGAAVSVLLQEVFRFA). The Cytoplasmic segment spans residues 90 to 118 (YYKLLKKADEGLASLSEDGRSPISIRQMA). The helical transmembrane segment at 119-139 (YVSGLSFGIISGVFSVINILA) threads the bilayer. The Lumenal portion of the chain corresponds to 140–158 (DALGPGVVGIHGDSPYYFL). The chain crosses the membrane as a helical span at residues 159-179 (TSAFLTAAIILLHTFWGVVFF). The Cytoplasmic portion of the chain corresponds to 180 to 186 (DACERRR). The chain crosses the membrane as a helical span at residues 187–207 (YWALGLVVGSHLLTSGLTFLN). The Lumenal segment spans residues 208–213 (PWYEAS). The helical transmembrane segment at 214-234 (LLPIYAVTVSMGLWAFITAGG) threads the bilayer. Topologically, residues 235–265 (SLRSIQRSLLCRRQEDSRVMVYSALRIPPED) are cytoplasmic.

Belongs to the APH-1 family. In terms of assembly, the functional gamma-secretase complex is composed of at least four polypeptides: a presenilin homodimer (PSEN1 or PSEN2), nicastrin (NCSTN), APH1 (APH1A or APH1B) and PSENEN/PEN2. Widely expressed. Expressed in leukocytes, lung, placenta, small intestine, liver, kidney, spleen thymus, skeletal muscle, heart and brain. Isoform 1 and isoform 2 are nearly expressed at the same level.

The protein localises to the endoplasmic reticulum membrane. It localises to the golgi apparatus. It is found in the golgi stack membrane. Functionally, non-catalytic subunit of the gamma-secretase complex, an endoprotease complex that catalyzes the intramembrane cleavage of integral membrane proteins such as Notch receptors and APP (amyloid-beta precursor protein). Required for normal gamma-secretase assembly. The gamma-secretase complex plays a role in Notch and Wnt signaling cascades and regulation of downstream processes via its role in processing key regulatory proteins, and by regulating cytosolic CTNNB1 levels. This Homo sapiens (Human) protein is Gamma-secretase subunit APH-1A (APH1A).